The primary structure comprises 373 residues: Chaperone protein DnaJ (373 aa).

The J domain occupies 5 to 70; the sequence is DYYEVLGLQK…EKKSNYDQFG (66 aa). Residues 132-214 form a CR-type zinc finger; it reads GVEKEITVNR…CRGNGNVRKT (83 aa). Positions 145, 148, 162, 165, 188, 191, 202, and 205 each coordinate Zn(2+). CXXCXGXG motif repeat units lie at residues 145-152, 162-169, 188-195, and 202-209; these read CEHCNGSG, CPTCSGTG, CDRCSGTG, and CTHCRGNG.

Belongs to the DnaJ family. As to quaternary structure, homodimer. Zn(2+) serves as cofactor.

The protein resides in the cytoplasm. Functionally, participates actively in the response to hyperosmotic and heat shock by preventing the aggregation of stress-denatured proteins and by disaggregating proteins, also in an autonomous, DnaK-independent fashion. Unfolded proteins bind initially to DnaJ; upon interaction with the DnaJ-bound protein, DnaK hydrolyzes its bound ATP, resulting in the formation of a stable complex. GrpE releases ADP from DnaK; ATP binding to DnaK triggers the release of the substrate protein, thus completing the reaction cycle. Several rounds of ATP-dependent interactions between DnaJ, DnaK and GrpE are required for fully efficient folding. Also involved, together with DnaK and GrpE, in the DNA replication of plasmids through activation of initiation proteins. In Clostridium botulinum (strain Eklund 17B / Type B), this protein is Chaperone protein DnaJ.